The following is a 372-amino-acid chain: N-methyl-L-tryptophan oxidase (372 aa).

Residue 4-34 (DLIIIGSGSVGAAAGYYATRAGLKVLMTDAH) coordinates FAD. Cys-307 carries the S-8alpha-FAD cysteine modification.

The protein belongs to the MSOX/MTOX family. MTOX subfamily. Monomer. FAD is required as a cofactor.

The catalysed reaction is N(alpha)-methyl-L-tryptophan + O2 + H2O = L-tryptophan + formaldehyde + H2O2. In terms of biological role, catalyzes the oxidative demethylation of N-methyl-L-tryptophan. The polypeptide is N-methyl-L-tryptophan oxidase (Salmonella agona (strain SL483)).